The chain runs to 161 residues: Cyclic pyranopterin monophosphate synthase (161 aa).

Substrate-binding positions include 75–77 (LCH) and 113–114 (ME). Asp-128 is a catalytic residue.

Belongs to the MoaC family. In terms of assembly, homohexamer; trimer of dimers.

It catalyses the reaction (8S)-3',8-cyclo-7,8-dihydroguanosine 5'-triphosphate = cyclic pyranopterin phosphate + diphosphate. The protein operates within cofactor biosynthesis; molybdopterin biosynthesis. Catalyzes the conversion of (8S)-3',8-cyclo-7,8-dihydroguanosine 5'-triphosphate to cyclic pyranopterin monophosphate (cPMP). The protein is Cyclic pyranopterin monophosphate synthase of Escherichia coli O139:H28 (strain E24377A / ETEC).